Reading from the N-terminus, the 210-residue chain is Putative transmembrane protein DDB_G0267530 (210 aa).

Residues 1 to 40 form a disordered region; that stretch reads MGVEDQPQTQPQTQPQQQPQMGYQPQMGYQPQAQMGYQPQ. 2 consecutive transmembrane segments (helical) span residues 119-139 and 148-168; these read VIVF…FFFI and TFGI…VIVV.

It localises to the membrane. The polypeptide is Putative transmembrane protein DDB_G0267530 (Dictyostelium discoideum (Social amoeba)).